The following is a 439-amino-acid chain: Ornithine aminotransferase, mitochondrial (439 aa).

A mitochondrion-targeting transit peptide spans 1-25; it reads MLSKLARLQTVAGLGLGVHSSVASA. An N6-acetyllysine mark is found at Lys-49 and Lys-66. Residue Lys-102 is modified to N6-succinyllysine. The residue at position 107 (Lys-107) is an N6-acetyllysine; alternate. Lys-107 carries the post-translational modification N6-succinyllysine; alternate. At Lys-292 the chain carries N6-(pyridoxal phosphate)lysine. Lys-362 is modified (N6-acetyllysine; alternate). Lys-362 carries the post-translational modification N6-succinyllysine; alternate. Residues Lys-386 and Lys-392 each carry the N6-acetyllysine modification. The residue at position 405 (Lys-405) is an N6-acetyllysine; alternate. Lys-405 carries the post-translational modification N6-succinyllysine; alternate. Residue Lys-421 is modified to N6-acetyllysine.

It belongs to the class-III pyridoxal-phosphate-dependent aminotransferase family. As to quaternary structure, homohexamer. It depends on pyridoxal 5'-phosphate as a cofactor.

The protein localises to the mitochondrion matrix. It carries out the reaction L-ornithine + 2-oxoglutarate = L-glutamate 5-semialdehyde + L-glutamate. The protein operates within amino-acid biosynthesis; L-proline biosynthesis; L-glutamate 5-semialdehyde from L-ornithine: step 1/1. Its function is as follows. Catalyzes the reversible interconversion of L-ornithine and 2-oxoglutarate to L-glutamate semialdehyde and L-glutamate. The protein is Ornithine aminotransferase, mitochondrial (OAT) of Bos taurus (Bovine).